The chain runs to 626 residues: Chaperone protein HtpG (626 aa).

An a; substrate-binding region spans residues 1–341; the sequence is MIKKEFKAES…SEDLSLNISR (341 aa). The b stretch occupies residues 342 to 552; the sequence is EMLQHDRQLK…DGDVTIEMEK (211 aa). The interval 553 to 626 is c; the sequence is ILSAMPNNQE…FTNDICKLMS (74 aa).

This sequence belongs to the heat shock protein 90 family. Homodimer.

It is found in the cytoplasm. Its function is as follows. Molecular chaperone. Has ATPase activity. The sequence is that of Chaperone protein HtpG from Alkaliphilus metalliredigens (strain QYMF).